Consider the following 382-residue polypeptide: UDP-N-acetylglucosamine--N-acetylmuramyl-(pentapeptide) pyrophosphoryl-undecaprenol N-acetylglucosamine transferase (382 aa).

UDP-N-acetyl-alpha-D-glucosamine contacts are provided by residues 11 to 13 (TGG), asparagine 124, arginine 164, serine 192, and glutamine 314.

This sequence belongs to the glycosyltransferase 28 family. MurG subfamily.

The protein resides in the cell membrane. The enzyme catalyses di-trans,octa-cis-undecaprenyl diphospho-N-acetyl-alpha-D-muramoyl-L-alanyl-D-glutamyl-meso-2,6-diaminopimeloyl-D-alanyl-D-alanine + UDP-N-acetyl-alpha-D-glucosamine = di-trans,octa-cis-undecaprenyl diphospho-[N-acetyl-alpha-D-glucosaminyl-(1-&gt;4)]-N-acetyl-alpha-D-muramoyl-L-alanyl-D-glutamyl-meso-2,6-diaminopimeloyl-D-alanyl-D-alanine + UDP + H(+). It functions in the pathway cell wall biogenesis; peptidoglycan biosynthesis. In terms of biological role, cell wall formation. Catalyzes the transfer of a GlcNAc subunit on undecaprenyl-pyrophosphoryl-MurNAc-pentapeptide (lipid intermediate I) to form undecaprenyl-pyrophosphoryl-MurNAc-(pentapeptide)GlcNAc (lipid intermediate II). This Deinococcus deserti (strain DSM 17065 / CIP 109153 / LMG 22923 / VCD115) protein is UDP-N-acetylglucosamine--N-acetylmuramyl-(pentapeptide) pyrophosphoryl-undecaprenol N-acetylglucosamine transferase.